Consider the following 1306-residue polypeptide: Contactin-associated protein-like 5 (1306 aa).

The first 24 residues, 1–24, serve as a signal peptide directing secretion; it reads MDSLPRLTSVLTLLFSGLWHLGLT. The Extracellular portion of the chain corresponds to 25-1237; the sequence is ATNYNCDDPL…PLTNAVRSDS (1213 aa). The F5/8 type C domain occupies 30–174; that stretch reads CDDPLASLLS…IGMRVEVYGC (145 aa). Cys30 and Cys174 are disulfide-bonded. 2 consecutive Laminin G-like domains span residues 180 to 360 and 367 to 544; these read VADF…TFSC and PITF…IDLC. N-linked (GlcNAc...) asparagine glycosylation is found at Asn282, Asn355, and Asn496. Cys329 and Cys360 are oxidised to a cystine. 3 disulfides stabilise this stretch: Cys512/Cys544, Cys550/Cys561, and Cys555/Cys570. The 38-residue stretch at 546–583 folds into the EGF-like 1 domain; that stretch reads IKDRCLPNYCEHGGSCSQSWTTFYCNCSDTSYTGATCH. The N-linked (GlcNAc...) asparagine glycan is linked to Asn571. Cys572 and Cys582 are oxidised to a cystine. A Fibrinogen C-terminal domain is found at 584–790; that stretch reads NSIYEQSCEV…LRCYGDRRFW (207 aa). Asn622 carries an N-linked (GlcNAc...) asparagine glycan. The 166-residue stretch at 791 to 956 folds into the Laminin G-like 3 domain; it reads NAVSFYTEAS…KVTSGVRPGC (166 aa). Disulfide bonds link Cys929–Cys956, Cys960–Cys973, Cys967–Cys982, Cys984–Cys994, and Cys1164–Cys1199. The 39-residue stretch at 957–995 folds into the EGF-like 2 domain; the sequence is PGHCSSYGSICHNGGKCVEKHNGYLCDCTNSPYEGPFCK. Positions 1013 to 1199 constitute a Laminin G-like 4 domain; sequence QEPYPVTKNI…VHGTLTESSC (187 aa). Residues 1238–1258 form a helical membrane-spanning segment; it reads AVIGGVIAVVIFIIFCIIGIM. Topologically, residues 1259-1306 are cytoplasmic; sequence TRFLYQHKQSHRTSQMKEKEYPENLDSSFRNEIDLQNTVSECKREYFI.

This sequence belongs to the neurexin family.

It is found in the membrane. In terms of biological role, may play a role in the correct development and proper functioning of the peripheral and central nervous system and be involved in cell adhesion and intercellular communication. In Homo sapiens (Human), this protein is Contactin-associated protein-like 5 (CNTNAP5).